The primary structure comprises 200 residues: Flavin prenyltransferase UbiX (200 aa).

FMN contacts are provided by residues 15–17 (GAS), threonine 41, 102–105 (SMGT), and arginine 137. Tyrosine 167 and lysine 183 together coordinate dimethylallyl phosphate.

Belongs to the UbiX/PAD1 family.

The catalysed reaction is dimethylallyl phosphate + FMNH2 = prenylated FMNH2 + phosphate. Its function is as follows. Flavin prenyltransferase that catalyzes the synthesis of the prenylated FMN cofactor (prenyl-FMN) for 4-hydroxy-3-polyprenylbenzoic acid decarboxylase UbiD. The prenyltransferase is metal-independent and links a dimethylallyl moiety from dimethylallyl monophosphate (DMAP) to the flavin N5 and C6 atoms of FMN. This chain is Flavin prenyltransferase UbiX, found in Alkalihalophilus pseudofirmus (strain ATCC BAA-2126 / JCM 17055 / OF4) (Bacillus pseudofirmus).